The sequence spans 313 residues: tRNA dimethylallyltransferase (313 aa).

Residue 11–18 participates in ATP binding; the sequence is GPTAGGKT. Position 13–18 (13–18) interacts with substrate; it reads TAGGKT. 3 interaction with substrate tRNA regions span residues 36 to 39, 160 to 164, and 243 to 248; these read DSAL, QRIGR, and RCVGYR.

It belongs to the IPP transferase family. As to quaternary structure, monomer. Mg(2+) is required as a cofactor.

The catalysed reaction is adenosine(37) in tRNA + dimethylallyl diphosphate = N(6)-dimethylallyladenosine(37) in tRNA + diphosphate. Catalyzes the transfer of a dimethylallyl group onto the adenine at position 37 in tRNAs that read codons beginning with uridine, leading to the formation of N6-(dimethylallyl)adenosine (i(6)A). This Neisseria meningitidis serogroup B (strain ATCC BAA-335 / MC58) protein is tRNA dimethylallyltransferase.